A 340-amino-acid chain; its full sequence is Uroporphyrinogen decarboxylase (340 aa).

Substrate is bound by residues 21–25, Asp71, Tyr148, Ser203, and His316; that span reads RQAGR.

This sequence belongs to the uroporphyrinogen decarboxylase family. As to quaternary structure, homodimer.

The protein localises to the cytoplasm. The catalysed reaction is uroporphyrinogen III + 4 H(+) = coproporphyrinogen III + 4 CO2. It participates in porphyrin-containing compound metabolism; protoporphyrin-IX biosynthesis; coproporphyrinogen-III from 5-aminolevulinate: step 4/4. Functionally, catalyzes the decarboxylation of four acetate groups of uroporphyrinogen-III to yield coproporphyrinogen-III. The chain is Uroporphyrinogen decarboxylase from Campylobacter lari (strain RM2100 / D67 / ATCC BAA-1060).